Here is a 666-residue protein sequence, read N- to C-terminus: Translation factor guf1, mitochondrial (666 aa).

The N-terminal 43 residues, 1 to 43, are a transit peptide targeting the mitochondrion; the sequence is MRGCLQLARWLRAAPKCPAASLLKPPSGLANPARFFTTSTACW. One can recognise a tr-type G domain in the interval 68-248; it reads DRYRNFCIVA…TVVEKIPAPV (181 aa). GTP contacts are provided by residues 77-84, 141-145, and 195-198; these read AHVDHGKS, DTPGH, and NKVD.

It belongs to the TRAFAC class translation factor GTPase superfamily. Classic translation factor GTPase family. LepA subfamily.

The protein localises to the mitochondrion inner membrane. It catalyses the reaction GTP + H2O = GDP + phosphate + H(+). In terms of biological role, promotes mitochondrial protein synthesis. May act as a fidelity factor of the translation reaction, by catalyzing a one-codon backward translocation of tRNAs on improperly translocated ribosomes. Binds to mitochondrial ribosomes in a GTP-dependent manner. The sequence is that of Translation factor guf1, mitochondrial (guf1) from Aspergillus niger (strain ATCC MYA-4892 / CBS 513.88 / FGSC A1513).